The primary structure comprises 502 residues: Maturase K (502 aa).

The protein belongs to the intron maturase 2 family. MatK subfamily.

It is found in the plastid. The protein resides in the chloroplast. Usually encoded in the trnK tRNA gene intron. Probably assists in splicing its own and other chloroplast group II introns. The polypeptide is Maturase K (Vitis vinifera (Grape)).